Reading from the N-terminus, the 463-residue chain is O-acetyltransferase SAT5 (463 aa).

This sequence belongs to the trichothecene 3-O-acetyltransferase family.

It participates in mycotoxin biosynthesis. In terms of biological role, O-acetyltransferase; part of the satratoxin SC1 cluster involved in the biosynthesis of satratoxins, trichothecene mycotoxins that are associated with human food poisonings. Satratoxins are suggested to be made by products of multiple gene clusters (SC1, SC2 and SC3) that encode 21 proteins in all, including polyketide synthases, acetyltransferases, and other enzymes expected to modify the trichothecene skeleton. SC1 encodes 10 proteins, SAT1 to SAT10. The largest are SAT8, which encodes a putative polyketide synthase (PKS) with a conventional non-reducing architecture, and SAT10, a putative protein containing four ankyrin repeats and thus may be involved in protein scaffolding. The putative short-chain reductase SAT3 may assist the PKS in some capacity. SAT6 contains a secretory lipase domain and acts probably as a trichothecene esterase. SAT5 encodes a putative acetyltransferase, and so, with SAT6, may affect endogenous protection from toxicity. The probable transcription factor SAT9 may regulate the expression of the SC1 cluster. SC2 encodes proteins SAT11 to SAT16, the largest of which encodes the putative reducing PKS SAT13. SAT11 is a cytochrome P450 monooxygenase, while SAT14 and SAT16 are probable acetyltransferases. The SC2 cluster may be regulated by the transcription factor SAT15. SC3 is a small cluster that encodes 5 proteins, SAT17 to SAT21. SAT21 is a putative MFS-type transporter which may have a role in exporting secondary metabolites. The four other proteins putatively encoded in SC3 include the taurine hydroxylase-like protein SAT17, the O-methyltransferase SAT18, the acetyltransferase SAT19, and the Cys6-type zinc finger SAT20, the latter being probably involved in regulation of SC3 expression. This is O-acetyltransferase SAT5 from Stachybotrys chartarum (strain CBS 109288 / IBT 7711) (Toxic black mold).